We begin with the raw amino-acid sequence, 118 residues long: Protein YoeF (118 aa).

The chain is Protein YoeF (yoeF) from Escherichia coli (strain K12).